The sequence spans 164 residues: Small ribosomal subunit protein uS5 (164 aa).

In terms of domain architecture, S5 DRBM spans Leu10 to Val73.

This sequence belongs to the universal ribosomal protein uS5 family. In terms of assembly, part of the 30S ribosomal subunit. Contacts proteins S4 and S8.

In terms of biological role, with S4 and S12 plays an important role in translational accuracy. Its function is as follows. Located at the back of the 30S subunit body where it stabilizes the conformation of the head with respect to the body. The sequence is that of Small ribosomal subunit protein uS5 from Streptococcus pneumoniae serotype 2 (strain D39 / NCTC 7466).